The chain runs to 212 residues: MPLNEIVGVIGNLISNGYIKKQSVIDALMTVPRHKFIPKSMEEYAYIDSPLGIGYGQTISAIHMVGIMCEELDLDVGQNVLEVGTGSGYHAAVVSEIVGESGNVTTIERIPELFEKSKQVLLELGYENVEVVLGDGTKGYLENSPYDRIYVTASGPDVPKALFEQLNDGGIILAPVGSHFQTLMRYKKIHGKIFEEKLLEVAFVPLIGENGF.

Serine 60 is a catalytic residue.

Belongs to the methyltransferase superfamily. L-isoaspartyl/D-aspartyl protein methyltransferase family.

It localises to the cytoplasm. It carries out the reaction [protein]-L-isoaspartate + S-adenosyl-L-methionine = [protein]-L-isoaspartate alpha-methyl ester + S-adenosyl-L-homocysteine. In terms of biological role, catalyzes the methyl esterification of L-isoaspartyl residues in peptides and proteins that result from spontaneous decomposition of normal L-aspartyl and L-asparaginyl residues. It plays a role in the repair and/or degradation of damaged proteins. The protein is Protein-L-isoaspartate O-methyltransferase of Methanococcus maripaludis (strain C7 / ATCC BAA-1331).